The chain runs to 68 residues: U-poneritoxin(01)-Om4a (68 aa).

Positions 1–25 are cleaved as a signal peptide; the sequence is MKPSSLTLAFLVVFMMAIMYNSVQA. A propeptide spanning residues 26–39 is cleaved from the precursor; it reads EALADADAEAFAEA.

It belongs to the formicidae venom precursor-01 superfamily. As to quaternary structure, homo- or heterodimer with PLP7 (AC A0A348G6I9); disulfide-linked. In terms of processing, truncated sequences of this peptide have also been found in the venom. It is possible they have been cleaved in the venom. In terms of tissue distribution, expressed by the venom gland.

It is found in the secreted. Its function is as follows. This homodimer composed of two cationic amphipathic alpha-helical peptides has antimicrobial activities against E.coli (MIC=3.1 uM), S.aureus (MIC=3.1 uM), and S.cerevisiae (MIC=3.1 uM). It also shows histamine-releasing activity (66.4% at 10 uM) and a weak hemolytic activity (10.5% at 50 uM). The chain is U-poneritoxin(01)-Om4a from Odontomachus monticola (Trap-jaw ant).